A 229-amino-acid chain; its full sequence is Artemin (229 aa).

An N-acetylalanine modification is found at Ala-1. The 149-residue stretch at 25 to 173 folds into the Ferritin-like diiron domain; that stretch reads HNFDPECEKA…DCLSNLHCIG (149 aa).

It belongs to the ferritin family.

This Artemia salina (Brine shrimp) protein is Artemin.